The primary structure comprises 372 residues: Tubby-like F-box protein 9 (372 aa).

The segment at 1 to 51 is disordered; sequence MALWRCSSSWLSSVSRSSGGVGGGESKVSPEIAPVSGGEGEGEEEEGEEER. Residues 7-18 are compositionally biased toward low complexity; that stretch reads SSSWLSSVSRSS. The segment covering 40–49 has biased composition (acidic residues); sequence GEGEEEEGEE. The F-box domain occupies 50 to 105; it reads ERWSRLLPELLTEIMRRVDAGAERWPPRRDVVACACVCRRWRDAAVSVVRPPLECG.

Belongs to the TUB family. As to expression, ubiquitous.

This chain is Tubby-like F-box protein 9 (TULP9), found in Oryza sativa subsp. japonica (Rice).